An 89-amino-acid polypeptide reads, in one-letter code: Small ribosomal subunit protein uS15 (89 aa).

The protein belongs to the universal ribosomal protein uS15 family. In terms of assembly, part of the 30S ribosomal subunit. Forms a bridge to the 50S subunit in the 70S ribosome, contacting the 23S rRNA.

In terms of biological role, one of the primary rRNA binding proteins, it binds directly to 16S rRNA where it helps nucleate assembly of the platform of the 30S subunit by binding and bridging several RNA helices of the 16S rRNA. Forms an intersubunit bridge (bridge B4) with the 23S rRNA of the 50S subunit in the ribosome. This chain is Small ribosomal subunit protein uS15, found in Maridesulfovibrio salexigens (strain ATCC 14822 / DSM 2638 / NCIMB 8403 / VKM B-1763) (Desulfovibrio salexigens).